A 141-amino-acid chain; its full sequence is Hemoglobin subunit alpha (141 aa).

In terms of domain architecture, Globin spans 1–141; it reads VLSPADKKNV…VSTVLTSKYR (141 aa). A Phosphoserine modification is found at S3. An N6-succinyllysine mark is found at K7 and K11. Position 16 is an N6-acetyllysine; alternate (K16). The residue at position 16 (K16) is an N6-succinyllysine; alternate. Residue Y24 is modified to Phosphotyrosine. At S35 the chain carries Phosphoserine. K40 is subject to N6-succinyllysine. Residue S49 is modified to Phosphoserine. An O2-binding site is contributed by H58. Position 87 (H87) interacts with heme b. Residue S102 is modified to Phosphoserine. The residue at position 108 (T108) is a Phosphothreonine. Phosphoserine is present on residues S124 and S131. A phosphothreonine mark is found at T134 and T137. Residue S138 is modified to Phosphoserine.

Belongs to the globin family. Heterotetramer of two alpha chains and two beta chains. Red blood cells.

Involved in oxygen transport from the lung to the various peripheral tissues. Functionally, hemopressin acts as an antagonist peptide of the cannabinoid receptor CNR1. Hemopressin-binding efficiently blocks cannabinoid receptor CNR1 and subsequent signaling. The polypeptide is Hemoglobin subunit alpha (HBA) (Spermophilus citellus (European ground squirrel)).